A 345-amino-acid chain; its full sequence is Adenine deaminase (345 aa).

His-20, His-22, and His-204 together coordinate Zn(2+). Glu-207 functions as the Proton donor in the catalytic mechanism. Asp-285 serves as a coordination point for Zn(2+). Asp-286 is a binding site for substrate.

Belongs to the metallo-dependent hydrolases superfamily. Adenosine and AMP deaminases family. Adenine deaminase type 2 subfamily. The cofactor is Zn(2+).

The enzyme catalyses adenine + H2O + H(+) = hypoxanthine + NH4(+). In terms of biological role, catalyzes the hydrolytic deamination of adenine to hypoxanthine. Plays an important role in the purine salvage pathway and in nitrogen catabolism. In Ralstonia nicotianae (strain ATCC BAA-1114 / GMI1000) (Ralstonia solanacearum), this protein is Adenine deaminase.